A 429-amino-acid polypeptide reads, in one-letter code: Cell wall protein ECM33 (429 aa).

The first 19 residues, 1 to 19 (MQFKNALTATAILSASALA), serve as a signal peptide directing secretion. Residues N21, N56, N82, N196, N209, N227, N234, N241, N267, N279, N304, and N328 are each glycosylated (N-linked (GlcNAc...) asparagine). S339 is modified (phosphoserine). Residues 361 to 401 (LSSTSTESSKSSATSSASSSGDASNAQANVSASASSSSSSS) are compositionally biased toward low complexity. Residues 361–410 (LSSTSTESSKSSATSSASSSGDASNAQANVSASASSSSSSSKKSKGAAPE) form a disordered region. A glycan (N-linked (GlcNAc...) asparagine) is linked at N389. A lipid anchor (GPI-anchor amidated glycine) is attached at G406. The propeptide at 407–429 (AAPELVPATSFMGVVAAVGVALL) is removed in mature form.

Belongs to the SPS2 family. The GPI-anchor is attached to the protein in the endoplasmic reticulum and serves to target the protein to the cell surface. There, the glucosamine-inositol phospholipid moiety is cleaved off and the GPI-modified mannoprotein is covalently attached via its lipidless GPI glycan remnant to the 1,6-beta-glucan of the outer cell wall layer. In terms of processing, extensively N-glycosylated.

The protein resides in the cell membrane. It localises to the secreted. It is found in the cell wall. Its function is as follows. Required for proper cell wall integrity and for the correct assembly of the mannoprotein outer layer of the cell wall. Important for apical bud growth. The sequence is that of Cell wall protein ECM33 (ECM33) from Saccharomyces cerevisiae (strain ATCC 204508 / S288c) (Baker's yeast).